The sequence spans 287 residues: MWKCSTVINKNKLIKAEYHTFYTLLFAMAVNAVHLESDAFLVCMNHALSTEKEEVMGLCIGEVDTNRIVHIHSVIILRRSDKRKDRVEISPEQLSAASTEAERLAEMTGRPMRVVGWYHSHPHITVWPSHVDVRTQAMYQMMDQGFVGLIFSCFIEDKNTKTGRVLYTCFQSVQAQKGSEYERIEIPIHVVPHEAIGKVCLESAVELPRILCQEEQDTYRRIHSLTHLDPITKIHNGSVFTKNLCSQMSAISGPLLQWLEDRLEQNKQSIITLQKEKELLTQELAAL.

The MPN domain occupies 33–176 (VHLESDAFLV…YTCFQSVQAQ (144 aa)). Residues His119, His121, and Asp132 each contribute to the Zn(2+) site. Positions 119-132 (HSHPHITVWPSHVD) match the JAMM motif motif. A coiled-coil region spans residues 256–283 (LQWLEDRLEQNKQSIITLQKEKELLTQE).

This sequence belongs to the peptidase M67A family. BRCC36 subfamily. In terms of assembly, monomer. Homodimer. Component of the BRISC complex, at least composed of abraxas2, brcc3, babam1 and babam2. Interacts with abraxas2; the interaction is direct and may form a heterotetramer. Component of the BRCA1-A complex. Both the BRCA1-A complex and the BRISC complex bind polyubiquitin. It depends on Zn(2+) as a cofactor.

The protein localises to the nucleus. Its subcellular location is the cytoplasm. It is found in the cytoskeleton. It localises to the spindle pole. In terms of biological role, metalloprotease that specifically cleaves 'Lys-63'-linked polyubiquitin chains, leaving the last ubiquitin chain attached to its substrates. Catalytic subunit of the BRISC complex, a multiprotein complex that specifically cleaves 'Lys-63'-linked ubiquitin in various substrates; brcc3 does not have activity by itself, but needs to be associated into a higher-order assembly, for minimal in vitro activity. The chain is Lys-63-specific deubiquitinase from Danio rerio (Zebrafish).